The chain runs to 163 residues: NADPH-dependent 7-cyano-7-deazaguanine reductase (163 aa).

Cys-54 serves as the catalytic Thioimide intermediate. Residue Asp-61 is the Proton donor of the active site. Substrate-binding positions include Val-76–Ser-78 and His-95–Glu-96.

The protein belongs to the GTP cyclohydrolase I family. QueF type 1 subfamily.

It is found in the cytoplasm. The catalysed reaction is 7-aminomethyl-7-carbaguanine + 2 NADP(+) = 7-cyano-7-deazaguanine + 2 NADPH + 3 H(+). It functions in the pathway tRNA modification; tRNA-queuosine biosynthesis. In terms of biological role, catalyzes the NADPH-dependent reduction of 7-cyano-7-deazaguanine (preQ0) to 7-aminomethyl-7-deazaguanine (preQ1). This chain is NADPH-dependent 7-cyano-7-deazaguanine reductase, found in Streptococcus thermophilus (strain CNRZ 1066).